Reading from the N-terminus, the 393-residue chain is Phosphoglycerate kinase (393 aa).

Substrate-binding positions include 21–23, Arg-36, 59–62, Arg-114, and Arg-147; these read DIN and HFGR. Residues Lys-197, Glu-319, and 349 to 352 contribute to the ATP site; that span reads GGDT.

Belongs to the phosphoglycerate kinase family. In terms of assembly, monomer.

The protein localises to the cytoplasm. The catalysed reaction is (2R)-3-phosphoglycerate + ATP = (2R)-3-phospho-glyceroyl phosphate + ADP. The protein operates within carbohydrate degradation; glycolysis; pyruvate from D-glyceraldehyde 3-phosphate: step 2/5. This chain is Phosphoglycerate kinase, found in Dinoroseobacter shibae (strain DSM 16493 / NCIMB 14021 / DFL 12).